We begin with the raw amino-acid sequence, 125 residues long: Inner membrane protein YbjM (125 aa).

At methionine 1–arginine 6 the chain is on the cytoplasmic side. Residues tryptophan 7–histidine 27 traverse the membrane as a helical segment. The Periplasmic segment spans residues methionine 28–alanine 34. Residues alanine 35–phenylalanine 55 traverse the membrane as a helical segment. Over serine 56 to proline 64 the chain is Cytoplasmic. A helical membrane pass occupies residues leucine 65–proline 85. At threonine 86–glutamate 92 the chain is on the periplasmic side. Residues leucine 93–isoleucine 113 traverse the membrane as a helical segment. Residues serine 114–glutamine 125 lie on the Cytoplasmic side of the membrane.

It localises to the cell inner membrane. The chain is Inner membrane protein YbjM (ybjM) from Escherichia coli O157:H7.